Consider the following 755-residue polypeptide: E3 ubiquitin-protein ligase TRIM56 (755 aa).

The segment at 21–60 (CKICLEQLRAPKTLPCLHTYCQDCLAQLADGGRVRCPECR) adopts an RING-type zinc-finger fold. 2 B box-type zinc fingers span residues 98-149 (KPAC…VVDL) and 164-205 (RQAA…CLPL). Zn(2+)-binding residues include Cys169, His172, Cys192, and His197. Residues 216 to 314 (LEGLLAGVDN…AAAFARRVLS (99 aa)) are a coiled coil. Positions 371-484 (EEQQPQKDGG…SPALGPNLDG (114 aa)) are disordered. Residues 392–404 (SQSRREDEPKTER) are compositionally biased toward basic and acidic residues. Phosphothreonine occurs at positions 418 and 442. Residues 419 to 447 (PKEEKAQTTREEGAQTLEEDRAQTPHEDG) are compositionally biased toward basic and acidic residues. Positions 453 to 469 (RGGRPNKKKKFKGRLKS) are enriched in basic residues. The residue at position 475 (Ser475) is a Phosphoserine.

It belongs to the TRIM/RBCC family. Homooligomer. Interacts with STING1. Interacts with TICAM1. Post-translationally, (Microbial infection) Preferentially ubiquitinated with 'Lys-48' and 'Lys-11'-linked ubiquitin chains by Salmonella effector SopA leading to proteasomal targeting and degradation. In terms of processing, autoubiquitinated. As to expression, widely expressed (at protein level).

It localises to the cytoplasm. The enzyme catalyses S-ubiquitinyl-[E2 ubiquitin-conjugating enzyme]-L-cysteine + [acceptor protein]-L-lysine = [E2 ubiquitin-conjugating enzyme]-L-cysteine + N(6)-ubiquitinyl-[acceptor protein]-L-lysine.. It participates in protein modification; protein ubiquitination. Functionally, E3 ubiquitin-protein ligase that plays a key role in innate antiviral immunity by mediating ubiquitination of CGAS and STING1. In response to pathogen- and host-derived double-stranded DNA (dsDNA), targets STING1 to 'Lys-63'-linked ubiquitination, thereby promoting its homodimerization, a step required for the production of type I interferon IFN-beta. Also mediate monoubiquitination of CGAS, thereby promoting CGAS oligomerization and subsequent activation. Promotes also TNFalpha-induced NF-kappa-B signaling by mediating 'Lys-63'-linked ubiquitination TAK1, leading to enhanced interaction between TAK1 and CHUK/IKKalpha. Independently of its E3 ubiquitin ligase activity, positive regulator of TLR3 signaling. Potentiates extracellular double stranded RNA (dsRNA)-induced expression of IFNB1 and interferon-stimulated genes ISG15, IFIT1/ISG56, CXCL10, OASL and CCL5/RANTES. Promotes establishment of an antiviral state by TLR3 ligand and TLR3-mediated chemokine induction following infection by hepatitis C virus. Acts as a restriction factor of Zika virus through direct interaction with the viral RNA via its C-terminal region. The chain is E3 ubiquitin-protein ligase TRIM56 from Homo sapiens (Human).